Consider the following 299-residue polypeptide: Taste receptor type 2 member 16 (299 aa).

The Extracellular segment spans residues 1–5; the sequence is MVPTQ. The helical transmembrane segment at 6–26 threads the bilayer; that stretch reads VTIFSIIMYVLESLVIIVQSC. Residues 27 to 44 are Cytoplasmic-facing; that stretch reads TTVAVLFREWMHFQRLSP. A helical transmembrane segment spans residues 45 to 65; sequence VEIILISLGISHFCLQWTSML. Residues 66–82 lie on the Extracellular side of the membrane; sequence YNFGTYSRPVLLFWKVS. The chain crosses the membrane as a helical span at residues 83-103; the sequence is VVWEFMNVLTFWLTSLLAVLY. Over 104 to 125 the chain is Cytoplasmic; sequence CVKVSSFSHPVFLWLRLKILKL. A helical membrane pass occupies residues 126–146; sequence VLWLLLGALIASCLSIIPSVV. Topologically, residues 147–183 are extracellular; that stretch reads KYHIQMELLTLDHLPKNSSLILRLQMFEWYFSNPFKM. The N-linked (GlcNAc...) asparagine glycan is linked to N163. The chain crosses the membrane as a helical span at residues 184 to 204; that stretch reads IGFGVPFLVFLISIILLTVSL. Over 205–233 the chain is Cytoplasmic; the sequence is VQHWGQMKHYSSSSSSLRAQCTVLKSLAT. A helical membrane pass occupies residues 234 to 254; the sequence is FFIFFTSYFLTIVVSFIGTVF. Residues 255–258 lie on the Extracellular side of the membrane; the sequence is DKKS. A helical transmembrane segment spans residues 259–279; the sequence is WFWVCEAVIYGLVCIHFTSLM. At 280–299 the chain is on the cytoplasmic side; the sequence is MSNPTLKKALRLQFWSPESS.

The protein belongs to the G-protein coupled receptor T2R family. Interacts with RTP3 and RTP4. As to expression, expressed in subsets of taste receptor cells of the tongue and palate epithelium and exclusively in gustducin-positive cells. Expressed in the antrum and fundus (part of the stomach), duodenum and in gastric endocrine cells.

It is found in the cell membrane. Functionally, gustducin-coupled receptor implicated in the perception of bitter compounds in the oral cavity and the gastrointestinal tract. Signals through PLCB2 and the calcium-regulated cation channel TRPM5. In Rattus norvegicus (Rat), this protein is Taste receptor type 2 member 16 (Tas2r16).